The chain runs to 75 residues: Molt-inhibiting hormone (75 aa).

Intrachain disulfides connect Cys-7–Cys-44, Cys-24–Cys-40, and Cys-27–Cys-53. An Alanine amide modification is found at Ala-75.

The protein belongs to the arthropod CHH/MIH/GIH/VIH hormone family.

It is found in the secreted. Functionally, inhibits Y-organs where molting hormone (ecdysteroid) is secreted. A molting cycle is initiated when MIH secretion diminishes or stops. The sequence is that of Molt-inhibiting hormone from Procambarus clarkii (Red swamp crayfish).